The primary structure comprises 641 residues: MAGDCAIDTEKYSLLEDFNVDVEVENKAFETFSLCFWVYLLDSTTYPSAIIRQVHSDMSVSAPFLVLDENKKMMLLPLTLLHREAPDPVNTSSWTEVPNVSTTAKFPLQKWVHVGCEVSRNYMRLYICGELVGEQVLTSLMTNGTNSDCARKISLFSVGGDGYSVQGFIHSAEVLPSNLSASYHYTKDPPLWLSVDKPSTSGIELDEDGVWSVVSGTFCSLDVVLTNAIGQPVHKDVKVVASLLYADSGTHVEKRSDFEAFLLVSYEGIELSAEDKPCNLLNGCASFKFKLSQLSSKSDKRLFCIKFEIPEVKANYPFLETVTNQIRCISRNRDSVSSMKRIRLGEEKVSESKIVNGNGTSMEWRPQNHEEDNSSTDSENTEMRDSTAFRRYSIPDWIIFKYCLGNLTERALLLKEITNNSSDEEVSEFADQVSLYSGCSHHGYQIKMARKLIAEGTNAWNLISRNYRHVHWDNVVIEIEEHFMRIAKCSSRSLTHQDFDLLRRICGCYEYITQENFETMWCWLFPVASAVSRGLINGMWRSASPKWIEGFVTKEEAERSLQNQVPGTFILRFPTSRSWPHPDAGSVVVTYVGHDLVIHHRLLTINHICDSSERYTDAKQLQDMLLAEPELSRLGRIIRGI.

Residues 355-384 (VNGNGTSMEWRPQNHEEDNSSTDSENTEMR) form a disordered region. In terms of domain architecture, SH2 spans 547-641 (WIEGFVTKEE…SRLGRIIRGI (95 aa)).

In terms of processing, phosphorylated on tyrosine residues. In terms of tissue distribution, expressed in roots, leaves, stems and flowers.

In Arabidopsis thaliana (Mouse-ear cress), this protein is SH2 domain-containing protein A.